Here is a 392-residue protein sequence, read N- to C-terminus: MQAITLLGSTGSIGTQTLDLVAQYPERFQVVGLTSYSNVALLAEQVRRFRPQMVAIGREELLPELRSLLTGIRPLPELVAGTEGLCQVAAHPAAQRVVTGIVGCAGLLPTLAAIRAGKDIALANKETLVAGGPVVLPLVREYGVNLIPVDSEHSAIFQCLQGVPAGSLRRILLTASGGAFRDWPAEKLDQVTLADALKHPNWVMGRKITIDSATLMNKGLEVIEAHWLFGLDYDHIDILIHPQSIVHSLIELADTSVLAQLGWPDMHLPILYGLSWPERLATPWDPLDLVKLGSLTFKAPDHRKYPCMELAYAAGRRGGTLPAVLNAANEAAVALFLQERIRFLDIPRLLERVCERHQVIADPSLEDILQADAWARRETAQLAQQAPAQVLA.

Residues Thr10, Gly11, Ser12, Ile13, Asn38, and Asn124 each coordinate NADPH. Residue Lys125 coordinates 1-deoxy-D-xylulose 5-phosphate. Glu126 lines the NADPH pocket. Residue Asp150 participates in Mn(2+) binding. 1-deoxy-D-xylulose 5-phosphate contacts are provided by Ser151, Glu152, Ser176, and His199. Glu152 lines the Mn(2+) pocket. Gly205 is an NADPH binding site. The 1-deoxy-D-xylulose 5-phosphate site is built by Ser212, Asn217, Lys218, and Glu221. Residue Glu221 participates in Mn(2+) binding.

This sequence belongs to the DXR family. Mg(2+) serves as cofactor. The cofactor is Mn(2+).

The catalysed reaction is 2-C-methyl-D-erythritol 4-phosphate + NADP(+) = 1-deoxy-D-xylulose 5-phosphate + NADPH + H(+). Its pathway is isoprenoid biosynthesis; isopentenyl diphosphate biosynthesis via DXP pathway; isopentenyl diphosphate from 1-deoxy-D-xylulose 5-phosphate: step 1/6. Catalyzes the NADPH-dependent rearrangement and reduction of 1-deoxy-D-xylulose-5-phosphate (DXP) to 2-C-methyl-D-erythritol 4-phosphate (MEP). The protein is 1-deoxy-D-xylulose 5-phosphate reductoisomerase of Synechococcus sp. (strain JA-2-3B'a(2-13)) (Cyanobacteria bacterium Yellowstone B-Prime).